A 278-amino-acid chain; its full sequence is TATA box-binding protein-associated factor RNA polymerase I subunit D (278 aa).

Disordered regions lie at residues 19 to 71 and 88 to 115; these read LANR…SSFE and KKRYKKKKKKRYQPTGRPRGRPEGRRNP. The residue at position 23 (S23) is a Phosphoserine. Basic residues-rich tracts occupy residues 43–53 and 88–99; these read REKRNPIRKFV and KKRYKKKKKKRY. 2 positions are modified to phosphoserine: S138 and S234.

Component of the transcription factor SL1/TIF-IB complex, composed of TBP and at least TAF1A, TAF1B, TAF1C and TAF1D. Interacts with UBTF.

Its subcellular location is the nucleus. In terms of biological role, component of the transcription factor SL1/TIF-IB complex, which is involved in the assembly of the PIC (preinitiation complex) during RNA polymerase I-dependent transcription. The rate of PIC formation probably is primarily dependent on the rate of association of SL1/TIF-IB with the rDNA promoter. SL1/TIF-IB is involved in stabilization of nucleolar transcription factor 1/UBTF on rDNA. Formation of SL1/TIF-IB excludes the association of TBP with TFIID subunits. The chain is TATA box-binding protein-associated factor RNA polymerase I subunit D (TAF1D) from Pongo abelii (Sumatran orangutan).